A 164-amino-acid chain; its full sequence is Large ribosomal subunit protein uL10 (164 aa).

This sequence belongs to the universal ribosomal protein uL10 family. Part of the ribosomal stalk of the 50S ribosomal subunit. The N-terminus interacts with L11 and the large rRNA to form the base of the stalk. The C-terminus forms an elongated spine to which L12 dimers bind in a sequential fashion forming a multimeric L10(L12)X complex.

Its function is as follows. Forms part of the ribosomal stalk, playing a central role in the interaction of the ribosome with GTP-bound translation factors. The chain is Large ribosomal subunit protein uL10 from Pseudoalteromonas translucida (strain TAC 125).